We begin with the raw amino-acid sequence, 291 residues long: Lipoyl synthase (291 aa).

[4Fe-4S] cluster contacts are provided by C35, C40, C46, C61, C65, C68, and S273. One can recognise a Radical SAM core domain in the interval 47–262 (FGKRQATFLI…KEKALAMGFE (216 aa)).

This sequence belongs to the radical SAM superfamily. Lipoyl synthase family. It depends on [4Fe-4S] cluster as a cofactor.

Its subcellular location is the cytoplasm. The catalysed reaction is [[Fe-S] cluster scaffold protein carrying a second [4Fe-4S](2+) cluster] + N(6)-octanoyl-L-lysyl-[protein] + 2 oxidized [2Fe-2S]-[ferredoxin] + 2 S-adenosyl-L-methionine + 4 H(+) = [[Fe-S] cluster scaffold protein] + N(6)-[(R)-dihydrolipoyl]-L-lysyl-[protein] + 4 Fe(3+) + 2 hydrogen sulfide + 2 5'-deoxyadenosine + 2 L-methionine + 2 reduced [2Fe-2S]-[ferredoxin]. It functions in the pathway protein modification; protein lipoylation via endogenous pathway; protein N(6)-(lipoyl)lysine from octanoyl-[acyl-carrier-protein]: step 2/2. In terms of biological role, catalyzes the radical-mediated insertion of two sulfur atoms into the C-6 and C-8 positions of the octanoyl moiety bound to the lipoyl domains of lipoate-dependent enzymes, thereby converting the octanoylated domains into lipoylated derivatives. The polypeptide is Lipoyl synthase (Geobacter sp. (strain M21)).